Consider the following 199-residue polypeptide: MTRCDDRPSASQISITHVTQGSCVASASPNEVYATILGSCICTCMCDPVAGVGGMNHFLLPSADVEDAQHLRYGSHAMELLINALLKLGAARQRIEAKIFGGAMMTPQLGAIGQANAAFARRYLRDEGIRCTAHSLGGNRARRIRFWPKTGRVQQMFLGSEDVVPNEQPQFRLQGGAGDVTFFDRHNNAEMPDPIKEPR.

It belongs to the CheD family.

The catalysed reaction is L-glutaminyl-[protein] + H2O = L-glutamyl-[protein] + NH4(+). Its function is as follows. Probably deamidates glutamine residues to glutamate on methyl-accepting chemotaxis receptors (MCPs), playing an important role in chemotaxis. This Cereibacter sphaeroides (strain ATCC 17029 / ATH 2.4.9) (Rhodobacter sphaeroides) protein is Probable chemoreceptor glutamine deamidase CheD.